The primary structure comprises 655 residues: Macrolide export ATP-binding/permease protein MacB (655 aa).

In terms of domain architecture, ABC transporter spans 6-244 (IVLRGLRREY…VAAPTAAAAQ (239 aa)). ATP is bound at residue 42–49 (GASGSGKS). The next 4 membrane-spanning stretches (helical) occupy residues 279-299 (FLTMLGIIIGIASVVFIVAVG), 528-548 (LTLMIAAIAVISLVVGGIGVM), 579-599 (FLIEAVMVCLIGGGLGVAVAY), and 618-638 (AGSIIAAFICSTGIGVVFGYL).

It belongs to the ABC transporter superfamily. Macrolide exporter (TC 3.A.1.122) family. In terms of assembly, homodimer.

The protein resides in the cell inner membrane. Functionally, non-canonical ABC transporter that contains transmembrane domains (TMD), which form a pore in the inner membrane, and an ATP-binding domain (NBD), which is responsible for energy generation. Confers resistance against macrolides. This is Macrolide export ATP-binding/permease protein MacB from Rhodopseudomonas palustris (strain BisB18).